Here is a 490-residue protein sequence, read N- to C-terminus: MDLVTFLVLTLSSLILLSLWRQRSRRGRLPPGPTPFPIIGNFLQIDVKNFNQSLTNFSKTYGPVFTLYLGSRPIVVLHGYEAVKEALIDHGEEFSGRENIPMSEKINNGLGITFSNGNSWKETRRFTLMTLRNLGMGKRNIEDRVREEAQCLVEELRKTKGSPCDPTFILSCAPCNVICSIIFQDRFDYKDKDFLMLMKKLNENVKILSSPWLQVCNNFPLLIDYCPGSHHKVLKNFKYIRSYLLEKVKEHQESLDVTNPRDFIDYFLIKQKQANHIEQAEYSLENLVCTINNLFAAGTETTSTTLRYALLLLMKYPDVTAKVQEEIDHVVGRHRSPCMQDRSRMPYTDAMIHEVQRFINLVPNNLPHAVTCDIKFRNYIIPKGTTVVTSLTSVLHDSKEFPNPEMFDPGHFLDANGNFKKSDYFMTFSAGKRVCAGEGLARMELFLILTTILQNFKLKSLVHPKDIDMIPFVNGLITLPPHYQLCFIPL.

The N-terminal stretch at M1–W20 is a signal peptide. C435 is a heme binding site.

It belongs to the cytochrome P450 family. It depends on heme as a cofactor. As to expression, liver, brain, kidney, and intestine, with trace amounts in lung and heart.

The protein resides in the endoplasmic reticulum membrane. Its subcellular location is the microsome membrane. The catalysed reaction is an organic molecule + reduced [NADPH--hemoprotein reductase] + O2 = an alcohol + oxidized [NADPH--hemoprotein reductase] + H2O + H(+). It catalyses the reaction (5Z,8Z,11Z,14Z)-eicosatetraenoate + reduced [NADPH--hemoprotein reductase] + O2 = 11,12-epoxy-(5Z,8Z,14Z)-eicosatrienoate + oxidized [NADPH--hemoprotein reductase] + H2O + H(+). It participates in lipid metabolism; arachidonate metabolism. Functionally, a cytochrome P450 monooxygenase that primarily catalyzes the epoxidation of 11,12 double bond of (5Z,8Z,11Z,14Z)-eicosatetraenoic acid (arachidonate) forming 11,12-epoxyeicosatrienoic acid (11,12-EET) regioisomer. Mechanistically, uses molecular oxygen inserting one oxygen atom into a substrate, and reducing the second into a water molecule, with two electrons provided by NADPH via cytochrome P450 reductase (CPR; NADPH--hemoprotein reductase). In Mus musculus (Mouse), this protein is Cytochrome P450 2C38.